The sequence spans 176 residues: Large ribosomal subunit protein uL10 (176 aa).

This sequence belongs to the universal ribosomal protein uL10 family. Part of the ribosomal stalk of the 50S ribosomal subunit. The N-terminus interacts with L11 and the large rRNA to form the base of the stalk. The C-terminus forms an elongated spine to which L12 dimers bind in a sequential fashion forming a multimeric L10(L12)X complex.

In terms of biological role, forms part of the ribosomal stalk, playing a central role in the interaction of the ribosome with GTP-bound translation factors. The sequence is that of Large ribosomal subunit protein uL10 from Leuconostoc citreum (strain KM20).